The following is a 362-amino-acid chain: Endolytic peptidoglycan transglycosylase RlpA (362 aa).

An N-terminal signal peptide occupies residues 1-17; that stretch reads MRKQWLGICIAAGMLAA. A lipid anchor (N-palmitoyl cysteine) is attached at Cys-18. Cys-18 carries S-diacylglycerol cysteine lipidation. The segment at 198-276 is disordered; that stretch reads PDLSGGAGTS…PSTTPATSPA (79 aa). Residues 262–276 show a composition bias toward low complexity; sequence PVVTAPSTTPATSPA. Residues 285–361 form the SPOR domain; it reads QSASGNFMVQ…AQLQSFITTA (77 aa).

This sequence belongs to the RlpA family.

Its subcellular location is the cell membrane. Lytic transglycosylase with a strong preference for naked glycan strands that lack stem peptides. This is Endolytic peptidoglycan transglycosylase RlpA from Escherichia coli (strain K12).